The sequence spans 123 residues: UPF0102 protein mma_0204 (123 aa).

This sequence belongs to the UPF0102 family.

In Janthinobacterium sp. (strain Marseille) (Minibacterium massiliensis), this protein is UPF0102 protein mma_0204.